The chain runs to 630 residues: Heat shock cognate 70 kDa protein 3 (630 aa).

Positions 611–630 (FYQGNNNPKPTTTTFNQDLD) are disordered. Residues 615–630 (NNNPKPTTTTFNQDLD) show a composition bias toward low complexity.

It belongs to the heat shock protein 70 family.

Its function is as follows. May function in protein folding and assembly, and disassembly of protein complexes. This chain is Heat shock cognate 70 kDa protein 3, found in Dictyostelium discoideum (Social amoeba).